Here is a 266-residue protein sequence, read N- to C-terminus: Translation initiation factor 2 subunit alpha (266 aa).

One can recognise an S1 motif domain in the interval 12-83 (GEILIATVKQ…RKGTVDVSLK (72 aa)).

It belongs to the eIF-2-alpha family. As to quaternary structure, heterotrimer composed of an alpha, a beta and a gamma chain.

In terms of biological role, eIF-2 functions in the early steps of protein synthesis by forming a ternary complex with GTP and initiator tRNA. The protein is Translation initiation factor 2 subunit alpha of Saccharolobus islandicus (strain M.16.27) (Sulfolobus islandicus).